A 507-amino-acid polypeptide reads, in one-letter code: ATP synthase subunit alpha 2 (507 aa).

171 to 178 (GDRATGKT) serves as a coordination point for ATP.

The protein belongs to the ATPase alpha/beta chains family. As to quaternary structure, F-type ATPases have 2 components, CF(1) - the catalytic core - and CF(0) - the membrane proton channel. CF(1) has five subunits: alpha(3), beta(3), gamma(1), delta(1), epsilon(1). CF(0) has three main subunits: a(1), b(2) and c(9-12). The alpha and beta chains form an alternating ring which encloses part of the gamma chain. CF(1) is attached to CF(0) by a central stalk formed by the gamma and epsilon chains, while a peripheral stalk is formed by the delta and b chains.

The protein resides in the cell inner membrane. The catalysed reaction is ATP + H2O + 4 H(+)(in) = ADP + phosphate + 5 H(+)(out). Its function is as follows. Produces ATP from ADP in the presence of a proton gradient across the membrane. The alpha chain is a regulatory subunit. This is ATP synthase subunit alpha 2 from Gluconobacter oxydans (strain 621H) (Gluconobacter suboxydans).